The following is a 113-amino-acid chain: UPF0416 protein RF_0879 (113 aa).

Belongs to the UPF0416 family.

The polypeptide is UPF0416 protein RF_0879 (Rickettsia felis (strain ATCC VR-1525 / URRWXCal2) (Rickettsia azadi)).